The following is a 135-amino-acid chain: Protein PsiE homolog (135 aa).

A run of 4 helical transmembrane segments spans residues 20-40, 54-74, 82-102, and 107-127; these read VGLIMLAAILVVFLVKETIHL, YMLIEGIVIYFLYFEFIALIV, HFPLRYFIYIGITAIIRLIIV, and PIDTLIYSGSILVLVVTLYLA.

This sequence belongs to the PsiE family.

The protein resides in the cell inner membrane. In Yersinia pseudotuberculosis serotype IB (strain PB1/+), this protein is Protein PsiE homolog.